A 110-amino-acid polypeptide reads, in one-letter code: UPF0122 protein SAR1212 (110 aa).

Belongs to the UPF0122 family.

Functionally, might take part in the signal recognition particle (SRP) pathway. This is inferred from the conservation of its genetic proximity to ftsY/ffh. May be a regulatory protein. The protein is UPF0122 protein SAR1212 of Staphylococcus aureus (strain MRSA252).